The primary structure comprises 641 residues: 1-phosphatidylinositol 4,5-bisphosphate phosphodiesterase zeta-1 (641 aa).

In terms of domain architecture, EF-hand spans 35–70; it reads CSYIHVKRIFKDNDRLKQGRITIEEFRAIYRILTHR. A PI-PLC X-box domain is found at 155–299; sequence QDMTHPLNDY…LKFKVLVKNK (145 aa). Catalysis depends on residues H170 and H215. The 117-residue stretch at 382–498 folds into the PI-PLC Y-box domain; the sequence is LSDLVIYTKA…GYILKPHFLR (117 aa). The region spanning 498 to 622 is the C2 domain; sequence RESESYFNPS…KGYRRVPLFS (125 aa).

In terms of assembly, interacts via its C2 domain with PtdIns(3)P and, to a lesser extent, PtdIns(5)P in vitro. It depends on Ca(2+) as a cofactor.

The protein localises to the nucleus. The protein resides in the cytoplasm. Its subcellular location is the perinuclear region. It carries out the reaction a 1,2-diacyl-sn-glycero-3-phospho-(1D-myo-inositol-4,5-bisphosphate) + H2O = 1D-myo-inositol 1,4,5-trisphosphate + a 1,2-diacyl-sn-glycerol + H(+). In terms of biological role, the production of the second messenger molecules diacylglycerol (DAG) and inositol 1,4,5-trisphosphate (IP3) is mediated by activated phosphatidylinositol-specific phospholipase C enzymes. In vitro, hydrolyzes PtdIns(4,5)P2 in a Ca(2+)-dependent manner. Triggers intracellular Ca(2+) oscillations in oocytes solely during M phase and is involved in inducing oocyte activation and initiating embryonic development up to the blastocyst stage. Is therefore a strong candidate for the egg-activating soluble sperm factor that is transferred from the sperm into the egg cytoplasm following gamete membrane fusion. May exert an inhibitory effect on phospholipase-C-coupled processes that depend on calcium ions and protein kinase C, including CFTR trafficking and function. The protein is 1-phosphatidylinositol 4,5-bisphosphate phosphodiesterase zeta-1 of Macaca fascicularis (Crab-eating macaque).